Here is a 582-residue protein sequence, read N- to C-terminus: Semenogelin-2 (582 aa).

Positions 1-23 (MKSIILFVLSLLLILEKQAAVMG) are cleaved as a signal peptide. 3 disordered regions span residues 25–62 (KGGS…SKGS), 91–190 (HKTT…QGGS), and 272–553 (NLNQ…FSGA). Residues 50-59 (GQKDKQHTES) are compositionally biased toward basic and acidic residues. Residues 92-134 (KTTKSKQHLRRHQRLLNYKQKGRGRVKPKRHFHLIVIHRKGGQ) are compositionally biased toward basic residues. Polar residues-rich tracts occupy residues 137 to 161 (HGTQ…QYSN) and 174 to 190 (EQAS…QGGS). The segment covering 293–305 (TEERQPNHEEKSV) has biased composition (basic and acidic residues). The span at 325–335 (KSQNQVTIPSQ) shows a compositional bias: polar residues. Basic and acidic residues predominate over residues 336–345 (DQEHGHKENK). Over residues 385–395 (KSQNQVAIPSQ) the composition is skewed to polar residues. A compositionally biased stretch (basic and acidic residues) spans 396-405 (DQEHGHKENK). The segment covering 445 to 455 (KSQNQVTIPSQ) has biased composition (polar residues). Residues 456 to 465 (DQEHGHKENK) show a composition bias toward basic and acidic residues. Polar residues-rich tracts occupy residues 487-498 (KDVSQSSLSFQT) and 506-529 (SQIQ…NSGK). A compositionally biased stretch (basic and acidic residues) spans 530-546 (SADRKQDLLSHEQEGRY).

Belongs to the semenogelin family. Interacts with SERPINA5.

It localises to the secreted. Participates in the formation of a gel matrix (sperm coagulum) entrapping the accessory gland secretions and ejaculated spermatozoa. The sequence is that of Semenogelin-2 (SEMG2) from Macaca fascicularis (Crab-eating macaque).